The chain runs to 143 residues: Nucleoside diphosphate kinase (143 aa).

6 residues coordinate ATP: K11, F59, R87, T93, R104, and N114. H117 acts as the Pros-phosphohistidine intermediate in catalysis.

Belongs to the NDK family. Homotetramer. It depends on Mg(2+) as a cofactor.

The protein resides in the cytoplasm. It catalyses the reaction a 2'-deoxyribonucleoside 5'-diphosphate + ATP = a 2'-deoxyribonucleoside 5'-triphosphate + ADP. The catalysed reaction is a ribonucleoside 5'-diphosphate + ATP = a ribonucleoside 5'-triphosphate + ADP. Major role in the synthesis of nucleoside triphosphates other than ATP. The ATP gamma phosphate is transferred to the NDP beta phosphate via a ping-pong mechanism, using a phosphorylated active-site intermediate. This Shewanella frigidimarina (strain NCIMB 400) protein is Nucleoside diphosphate kinase.